Here is a 226-residue protein sequence, read N- to C-terminus: Transmembrane protein 204 (226 aa).

At 1-5 the chain is on the cytoplasmic side; that stretch reads MTVRK. The chain crosses the membrane as a helical span at residues 6-26; that stretch reads VVATAVLVALVSLVLNNAAAF. Over 27–103 the chain is Extracellular; sequence TPNWVYQTLE…LQFDMMRACN (77 aa). A helical membrane pass occupies residues 104 to 124; the sequence is LVATAALAAGQLTFVLGLTGL. Over 125-136 the chain is Cytoplasmic; the sequence is PLLSPDAQCWEE. The chain crosses the membrane as a helical span at residues 137–157; the sequence is AMAAAFQLASFVLVIGLVTFY. Topologically, residues 158–170 are extracellular; that stretch reads RIGPYTSLSWSCY. A helical membrane pass occupies residues 171–191; it reads LNIGACLLATLAAAMLIWNVL. The Cytoplasmic segment spans residues 192 to 226; that stretch reads HRREDCTAPRVIVISRSLTARFRRGLDNDYVESPC.

The protein resides in the cell junction. It is found in the adherens junction. The protein localises to the cell membrane. In terms of biological role, can influence paracellular permeability. Appears to be involved in cell-cell interactions through adherens. The polypeptide is Transmembrane protein 204 (TMEM204) (Bos taurus (Bovine)).